Reading from the N-terminus, the 500-residue chain is Aldehyde dehydrogenase, mitochondrial (500 aa).

An N6-acetyllysine mark is found at lysine 35, lysine 56, lysine 61, and lysine 142. Residue 245–250 participates in NAD(+) binding; it reads GSTEVG. Glutamate 268 (proton acceptor) is an active-site residue. Cysteine 302 (nucleophile) is an active-site residue. N6-acetyllysine is present on residues lysine 351, lysine 358, lysine 366, lysine 390, lysine 409, lysine 411, lysine 424, and lysine 434.

The protein belongs to the aldehyde dehydrogenase family. In terms of assembly, homotetramer. In terms of processing, in response to mitochondrial stress, the precursor protein is ubiquitinated by the SIFI complex in the cytoplasm before mitochondrial import, leading to its degradation. Within the SIFI complex, UBR4 initiates ubiquitin chain that are further elongated or branched by KCMF1.

It localises to the mitochondrion matrix. It carries out the reaction an aldehyde + NAD(+) + H2O = a carboxylate + NADH + 2 H(+). It functions in the pathway alcohol metabolism; ethanol degradation; acetate from ethanol: step 2/2. Functionally, required for clearance of cellular formaldehyde, a cytotoxic and carcinogenic metabolite that induces DNA damage. The protein is Aldehyde dehydrogenase, mitochondrial (ALDH2) of Mesocricetus auratus (Golden hamster).